The chain runs to 82 residues: Acyl carrier protein (82 aa).

One can recognise a Carrier domain in the interval 3–77 (SSIFDKVQNI…QAIEFIQHAI (75 aa)). S37 carries the O-(pantetheine 4'-phosphoryl)serine modification.

The protein belongs to the acyl carrier protein (ACP) family. In terms of processing, 4'-phosphopantetheine is transferred from CoA to a specific serine of apo-ACP by AcpS. This modification is essential for activity because fatty acids are bound in thioester linkage to the sulfhydryl of the prosthetic group.

The protein localises to the plastid. It localises to the chloroplast. It functions in the pathway lipid metabolism; fatty acid biosynthesis. Its function is as follows. Carrier of the growing fatty acid chain in fatty acid biosynthesis. This chain is Acyl carrier protein, found in Gracilaria tenuistipitata var. liui (Red alga).